The following is a 435-amino-acid chain: Sulfopropanediol 3-dehydrogenase (435 aa).

NAD(+)-binding residues include Tyr-119, Gln-181, and Asn-204. Residues Gln-249 and His-252 each coordinate Zn(2+). Residues Glu-319 and His-320 each act as proton acceptor in the active site. Asp-353 and His-412 together coordinate Zn(2+).

Belongs to the histidinol dehydrogenase family. HpsN subfamily. Requires Zn(2+) as cofactor.

It carries out the reaction (2R)-3-sulfopropanediol + 2 NAD(+) + H2O = (2R)-3-sulfolactate + 2 NADH + 3 H(+). Catalyzes the NAD-dependent oxidation of (R)-2,3-dihydroxypropane-1-sulfonate to (R)-3-sulfolactate. The polypeptide is Sulfopropanediol 3-dehydrogenase (Ruegeria pomeroyi (strain ATCC 700808 / DSM 15171 / DSS-3) (Silicibacter pomeroyi)).